We begin with the raw amino-acid sequence, 925 residues long: Eukaryotic translation initiation factor 3 subunit A (925 aa).

Residues 108 to 127 (QAQTDAKEESNKDQAEEDLE) are disordered. The span at 112–121 (DAKEESNKDQ) shows a compositional bias: basic and acidic residues. One can recognise a PCI domain in the interval 324 to 498 (FKFYSSQFVL…DTVSFAQDPF (175 aa)). 2 disordered regions span residues 509 to 544 (PESS…FTRN) and 839 to 925 (KEAL…AGRG). 2 coiled-coil regions span residues 534 to 666 (EEQN…MKKL) and 785 to 885 (SVIA…SSRS). Basic and acidic residues predominate over residues 839–880 (KEALAKEEELAKRRAERERINKERDEIARKQREIEELLEKKN). Over residues 916–925 (RLKRMNAGRG) the composition is skewed to basic residues.

This sequence belongs to the eIF-3 subunit A family. Component of the eukaryotic translation initiation factor 3 (eIF-3) complex.

It is found in the cytoplasm. Its function is as follows. RNA-binding component of the eukaryotic translation initiation factor 3 (eIF-3) complex, which is involved in protein synthesis of a specialized repertoire of mRNAs and, together with other initiation factors, stimulates binding of mRNA and methionyl-tRNAi to the 40S ribosome. The eIF-3 complex specifically targets and initiates translation of a subset of mRNAs involved in cell proliferation. In Kluyveromyces lactis (strain ATCC 8585 / CBS 2359 / DSM 70799 / NBRC 1267 / NRRL Y-1140 / WM37) (Yeast), this protein is Eukaryotic translation initiation factor 3 subunit A.